The primary structure comprises 445 residues: Chromosome partition protein MukF (445 aa).

The leucine-zipper stretch occupies residues 213-241; that stretch reads LSETSNTLKELQDTLQAAGDELQTQILDI.

Belongs to the MukF family. Interacts, and probably forms a ternary complex, with MukE and MukB via its C-terminal region. The complex formation is stimulated by calcium or magnesium. It is required for an interaction between MukE and MukB.

The protein resides in the cytoplasm. The protein localises to the nucleoid. Involved in chromosome condensation, segregation and cell cycle progression. May participate in facilitating chromosome segregation by condensation DNA from both sides of a centrally located replisome during cell division. Not required for mini-F plasmid partitioning. Probably acts via its interaction with MukB and MukE. Overexpression results in anucleate cells. It has a calcium binding activity. In Vibrio vulnificus (strain YJ016), this protein is Chromosome partition protein MukF.